A 416-amino-acid chain; its full sequence is Adenylosuccinate synthetase (416 aa).

GTP contacts are provided by residues G13–K19 and G41–T43. The active-site Proton acceptor is the D14. Residues D14 and G41 each coordinate Mg(2+). Residues D14–K17, N39–H42, T126, R140, Q220, T235, and R299 each bind IMP. Catalysis depends on H42, which acts as the Proton donor. Residue T295 to R301 participates in substrate binding. GTP is bound by residues R301, K327–D329, and S405–S407.

Belongs to the adenylosuccinate synthetase family. Homodimer. Mg(2+) serves as cofactor.

It is found in the cytoplasm. It carries out the reaction IMP + L-aspartate + GTP = N(6)-(1,2-dicarboxyethyl)-AMP + GDP + phosphate + 2 H(+). Its pathway is purine metabolism; AMP biosynthesis via de novo pathway; AMP from IMP: step 1/2. Its function is as follows. Plays an important role in the de novo pathway of purine nucleotide biosynthesis. Catalyzes the first committed step in the biosynthesis of AMP from IMP. This Sulfurovum sp. (strain NBC37-1) protein is Adenylosuccinate synthetase.